The following is a 770-amino-acid chain: Lysine-specific histone demethylase 1 (770 aa).

Residues 1–21 are disordered; that stretch reads MSSDTGSEYLDEEIRGDELGP. In terms of domain architecture, SWIRM spans 28 to 126; that stretch reads LAAAASAARL…FGRYVRSTKI (99 aa). Residue 137-165 coordinates FAD; that stretch reads VIVIGAGAAGISAATQLESFGFDVIVLEA. Residues 718–739 form a disordered region; it reads NEAVADIPNAPNAPNAQKPEEI.

It belongs to the flavin monoamine oxidase family. As to quaternary structure, probably part of a large repressor complex. Interacts with CoREST protein spr-1. Interacts with chromobox protein homolog hpl-1. It depends on FAD as a cofactor.

It localises to the nucleus. The catalysed reaction is N(6),N(6)-dimethyl-L-lysyl(4)-[histone H3] + 2 A + 2 H2O = L-lysyl(4)-[histone H3] + 2 formaldehyde + 2 AH2. Histone demethylase that specifically demethylates 'Lys-4' of histone H3, a specific tag for epigenetic transcriptional activation, thereby acting as a corepressor. Acts by oxidizing the substrate by FAD to generate the corresponding imine that is subsequently hydrolyzed. Demethylates both mono- and di-methylated 'Lys-4' of histone H3. May be involved in H3 demethylation in mitotic cells including gut and embryonic cells. Participates in the transcriptional repression of the presenilin protein hop-1. May act via the formation of a multiprotein complex that remodel or modify the chromatin. Together with met-2, set-17 and set-26, required for transgenerational fertility. Plays a role in developmental growth and lifespan regulation in response to ultraviolet-induced damage. This is Lysine-specific histone demethylase 1 from Caenorhabditis elegans.